The sequence spans 321 residues: G-protein coupled receptor aex-2 (321 aa).

The Extracellular portion of the chain corresponds to 1–24 (MNSTDIIANVTKPFVENLTLGETA). N-linked (GlcNAc...) asparagine glycans are attached at residues N2, N9, and N17. Residues 25-45 (FYISCGIVGTVFNALVLWIAL) form a helical membrane-spanning segment. The Cytoplasmic segment spans residues 46-55 (TYINTEDKPR). Residues 56–76 (QIIVINMTVADLLMCIVYMKT) traverse the membrane as a helical segment. Over 77–90 (RPWLSHFNLWLCHP) the chain is Extracellular. A disulfide bridge connects residues C88 and C161. A helical membrane pass occupies residues 91–111 (YYVIIWTCQMCSCLNLVWLNV). Residues 112–132 (DKLIYIQFPLHYYQIVNRKRL) are Cytoplasmic-facing. The chain crosses the membrane as a helical span at residues 133–153 (LWITAATWGGLYAMNIALVTF). Over 154–175 (LKITRGSCLGVSLNPYVYLLSP) the chain is Extracellular. Residues 176-196 (IFYVVMILTSFSLSALIYCIA) traverse the membrane as a helical segment. Over 197–221 (HNLTHMEERQRSKLFRRLFFLFSST) the chain is Cytoplasmic. Residues 222–242 (LWTFFTCLPYRLLYLFSIFCG) traverse the membrane as a helical segment. Residues 243-254 (ETCQINNYYKTA) are Extracellular-facing. A helical transmembrane segment spans residues 255–275 (TNLFFRLLIVGIMINPVITIW). At 276 to 321 (TQRIYRLRLMRMFGRLRENSSTEVLMVSNRRASERPPEHTPLRCDM) the chain is on the cytoplasmic side.

It belongs to the G-protein coupled receptor 1 family. Expressed in the intestinal muscle, anal depressor, AVL and DVB GABAergic neurons, enteric muscles, the nerve ring, the ventral nerve cord and head mesodermal cells.

It is found in the cell membrane. The protein localises to the cell projection. It localises to the cilium. G-protein coupled receptor for the nlp-40 neuropeptide. The activity of this receptor is mediated by G proteins which activate adenylyl cyclase. Plays a role in the defecation motor program, which is a coordinated series of three muscle contractions that occurs every 45 seconds. Specifically, acts in GABAergic neurons, such as AVL and DVB, to control the expulsion step of defecation. Required for fatty acid uptake and metabolism by intestinal cells and therefore regulates the levels of triglycerides in the intestine. In Caenorhabditis elegans, this protein is G-protein coupled receptor aex-2.